The following is a 529-amino-acid chain: MQHLRPIRRALLSVSDKAGILEFAKALVERNVELLSTGGTARLLAEAGLPVIEVSDYTGFPEMMDGRVKTLHPKVHGGILGRRGQDDTIMEEHDIRPIDMVVVNLYPFAKTVAHPDCSLADAVENIDIGGPTMVRSAAKNHKDVTIVVNSNDYEKVIEEMDNHQNSLTLDTRFDLAIKAFEHTAAYDSMIANYFGQKVAPYYGDTSQPSGTFPRTLNLNYIKKQDMRYGENAHQQAAFYIEENIEEASIATANQLQGKALSYNNIADTDAALECVKSFSEPACVIVKHANPCGVAIADTLTQAYDNAFKTDPTSAFGGIIAFNRSLDAKTASAVIERQFVEVIIAPSINEDALPILATKPNVRVLACGEWQEAKPALDFKRVNGGLLVQDRDLGMVKEENLRVVTQRQPSEREWKDALFCWKVAKFVKSNAIVYAKNDMTIGIGAGQMSRVYSAKIAGIKAADEGLEVAGCAMASDAFFPFRDGIDAAAMAGVTCVIQPGGSIRDDEVIAAANEHNIAMIFTNMRHFRH.

Residues 2–148 (QHLRPIRRAL…KNHKDVTIVV (147 aa)) form the MGS-like domain.

The protein belongs to the PurH family.

The enzyme catalyses (6R)-10-formyltetrahydrofolate + 5-amino-1-(5-phospho-beta-D-ribosyl)imidazole-4-carboxamide = 5-formamido-1-(5-phospho-D-ribosyl)imidazole-4-carboxamide + (6S)-5,6,7,8-tetrahydrofolate. It carries out the reaction IMP + H2O = 5-formamido-1-(5-phospho-D-ribosyl)imidazole-4-carboxamide. The protein operates within purine metabolism; IMP biosynthesis via de novo pathway; 5-formamido-1-(5-phospho-D-ribosyl)imidazole-4-carboxamide from 5-amino-1-(5-phospho-D-ribosyl)imidazole-4-carboxamide (10-formyl THF route): step 1/1. Its pathway is purine metabolism; IMP biosynthesis via de novo pathway; IMP from 5-formamido-1-(5-phospho-D-ribosyl)imidazole-4-carboxamide: step 1/1. The polypeptide is Bifunctional purine biosynthesis protein PurH (Proteus mirabilis (strain HI4320)).